Consider the following 220-residue polypeptide: Cytidylate kinase (220 aa).

Residue 11 to 19 (GPTASGKGT) coordinates ATP.

This sequence belongs to the cytidylate kinase family. Type 1 subfamily.

It localises to the cytoplasm. The catalysed reaction is CMP + ATP = CDP + ADP. It carries out the reaction dCMP + ATP = dCDP + ADP. The sequence is that of Cytidylate kinase from Polynucleobacter asymbioticus (strain DSM 18221 / CIP 109841 / QLW-P1DMWA-1) (Polynucleobacter necessarius subsp. asymbioticus).